Consider the following 246-residue polypeptide: Probable transcriptional regulatory protein CLD_1467 (246 aa).

This sequence belongs to the TACO1 family.

Its subcellular location is the cytoplasm. The sequence is that of Probable transcriptional regulatory protein CLD_1467 from Clostridium botulinum (strain Okra / Type B1).